A 132-amino-acid chain; its full sequence is Small ribosomal subunit protein uS8 (132 aa).

It belongs to the universal ribosomal protein uS8 family. In terms of assembly, part of the 30S ribosomal subunit. Contacts proteins S5 and S12.

Functionally, one of the primary rRNA binding proteins, it binds directly to 16S rRNA central domain where it helps coordinate assembly of the platform of the 30S subunit. The protein is Small ribosomal subunit protein uS8 of Borreliella burgdorferi (strain ZS7) (Borrelia burgdorferi).